Consider the following 400-residue polypeptide: Glutamyl-tRNA reductase (400 aa).

Substrate contacts are provided by residues 45-48 (TCNR), Ser103, 108-110 (EDQ), and Gln114. The Nucleophile role is filled by Cys46. 179–184 (GYGEIG) is an NADP(+) binding site.

This sequence belongs to the glutamyl-tRNA reductase family. As to quaternary structure, homodimer.

It catalyses the reaction (S)-4-amino-5-oxopentanoate + tRNA(Glu) + NADP(+) = L-glutamyl-tRNA(Glu) + NADPH + H(+). The protein operates within porphyrin-containing compound metabolism; protoporphyrin-IX biosynthesis; 5-aminolevulinate from L-glutamyl-tRNA(Glu): step 1/2. Functionally, catalyzes the NADPH-dependent reduction of glutamyl-tRNA(Glu) to glutamate 1-semialdehyde (GSA). The chain is Glutamyl-tRNA reductase from Clostridium perfringens (strain 13 / Type A).